A 246-amino-acid polypeptide reads, in one-letter code: MKTSLGKAALLALSMMPVTVFASHWSYEGEGSPEHWGALNEEYKTCQNGMNQSPINIDATFKTHLSPLDTHYIDGPITLINNGHTIQAALKTTTADTITIDGTPFILQQFHFHAPSENTVHGKHYAMEMHLVHKNAKGAVAVVAVMFEQGAENTELNKLWATMPEQAEQTAKIVTQMDLNALLPIDKTYWRFSGSLTTPPCSEGVTRIVLKHPLTLSSAQLAKFSHAMHHDNNRPVQPLNGRVVIE.

An N-terminal signal peptide occupies residues M1–A22. Residues S23–E246 form the Alpha-carbonic anhydrase domain. Cysteines 46 and 201 form a disulfide. The active-site Proton acceptor is the H84. Residues H111, H113, and H130 each contribute to the Zn(2+) site. Position 197 to 198 (T197 to T198) interacts with substrate.

It belongs to the alpha-carbonic anhydrase family. Requires Zn(2+) as cofactor.

It is found in the periplasm. The enzyme catalyses hydrogencarbonate + H(+) = CO2 + H2O. Its function is as follows. Reversible hydration of carbon dioxide. The polypeptide is Carbonic anhydrase (cah) (Klebsiella pneumoniae).